Reading from the N-terminus, the 87-residue chain is Small ribosomal subunit protein uS19 (87 aa).

It belongs to the universal ribosomal protein uS19 family.

Its function is as follows. Protein S19 forms a complex with S13 that binds strongly to the 16S ribosomal RNA. The sequence is that of Small ribosomal subunit protein uS19 (rpsS) from Mycoplasma genitalium (strain ATCC 33530 / DSM 19775 / NCTC 10195 / G37) (Mycoplasmoides genitalium).